Reading from the N-terminus, the 591-residue chain is L-gulonolactone oxidase 2 (591 aa).

The signal sequence occupies residues 1–27 (MAFTFPPSYRTLVGLYYIFTLMHTAVS). The 183-residue stretch at 56-238 (STCRAANVAY…SQVTFELQPM (183 aa)) folds into the FAD-binding PCMH-type domain.

The protein belongs to the oxygen-dependent FAD-linked oxidoreductase family. FAD is required as a cofactor.

It carries out the reaction L-gulono-1,4-lactone + O2 = L-ascorbate + H2O2 + H(+). It participates in cofactor biosynthesis; L-ascorbate biosynthesis. Catalyzes the oxidation of L-gulono-1,4-lactone to ascorbic acid. L-gulono-1,4-lactone is oxidized to hydrogen peroxide and L-xylo-hexulonolactone which spontaneously isomerizes to L-ascorbate. The protein is L-gulonolactone oxidase 2 of Arabidopsis thaliana (Mouse-ear cress).